A 982-amino-acid polypeptide reads, in one-letter code: Cell division cycle-associated protein 2 (982 aa).

The segment covering 75-87 has biased composition (polar residues); the sequence is VKTSSGKSTSSLQ. The interval 75–97 is disordered; sequence VKTSSGKSTSSLQKARRRSTVGV. Phosphoserine occurs at positions 100, 122, and 133. Disordered regions lie at residues 192 to 216 and 274 to 315; these read SGFP…NYLS and TPLS…CGSS. Polar residues-rich tracts occupy residues 207 to 216 and 275 to 315; these read SQDSPDNYLS and PLSS…CGSS. Phosphoserine is present on residues Ser-286, Ser-296, and Ser-306. Residue Thr-309 is modified to Phosphothreonine. The PP1-binding domain occupies 379–436; sequence KRKRVTFGEDLSPEVFDESLPANTPLCKGGTPVRPRTVKTTSPLQSPVHEQFLQPNFD. 2 positions are modified to phosphoserine: Ser-390 and Ser-397. Disordered stretches follow at residues 400 to 473, 489 to 545, 568 to 638, and 651 to 716; these read ANTP…NTCS, TRTS…KSYR, KPLL…QSQV, and ASER…PQSQ. Thr-402 is modified (phosphothreonine). Ser-424 bears the Phosphoserine mark. Composition is skewed to polar residues over residues 451–473 and 498–512; these read SFAN…NTCS and TLSS…TTQA. Positions 518 to 545 are enriched in basic residues; sequence KMSRRKSREKKHTSAALPKKKQVLKSYR. A phosphoserine mark is found at Ser-572 and Ser-595. Residues 651-668 are compositionally biased toward polar residues; it reads ASERGPNASTRDTGSEGN. A compositionally biased stretch (basic and acidic residues) spans 669 to 685; the sequence is TRAESKCQSAKEPKPGT. At Ser-735 the chain carries Phosphoserine. Residue Lys-741 forms a Glycyl lysine isopeptide (Lys-Gly) (interchain with G-Cter in SUMO2) linkage. The disordered stretch occupies residues 910–982; the sequence is ECPSSKEETI…SLKGESAQLP (73 aa). The residue at position 913 (Ser-913) is a Phosphoserine. Over residues 931-942 the composition is skewed to low complexity; sequence VSGSESQGVGSS. Residue Ser-950 is modified to Phosphoserine. Positions 952–964 are enriched in polar residues; the sequence is CGSTLTDANSATQ. Ser-973 carries the post-translational modification Phosphoserine.

As to quaternary structure, interacts with PPP1CC. Post-translationally, phosphorylated by CDK1. May regulate its subcellular location.

It is found in the nucleus. Regulator of chromosome structure during mitosis required for condensin-depleted chromosomes to retain their compact architecture through anaphase. Acts by mediating the recruitment of phopsphatase PP1-gamma subunit (PPP1CC) to chromatin at anaphase and into the following interphase. At anaphase onset, its association with chromatin targets a pool of PPP1CC to dephosphorylate substrates. The sequence is that of Cell division cycle-associated protein 2 (Cdca2) from Mus musculus (Mouse).